The following is a 108-amino-acid chain: Insulin (108 aa).

Positions 1 to 21 (MAVWIQAGALLFLLAVSSVNA) are cleaved as a signal peptide. Cystine bridges form between Cys30–Cys94, Cys42–Cys107, and Cys93–Cys98. A propeptide spans 54–85 (DVDPPLGFLPPKSAQETEVADFAFKDHAEVIR) (c peptide).

The protein belongs to the insulin family. As to quaternary structure, heterodimer of a B chain and an A chain linked by two disulfide bonds.

It localises to the secreted. In terms of biological role, insulin decreases blood glucose concentration. It increases cell permeability to monosaccharides, amino acids and fatty acids. It accelerates glycolysis, the pentose phosphate cycle, and glycogen synthesis in liver. The chain is Insulin (ins) from Cyprinus carpio (Common carp).